Reading from the N-terminus, the 250-residue chain is Heme oxygenase 2 (250 aa).

His16 contributes to the heme b binding site. The segment at Gln228 to Glu250 is disordered.

It belongs to the heme oxygenase family. As to quaternary structure, homodimer.

It carries out the reaction heme b + 3 reduced [NADPH--hemoprotein reductase] + 3 O2 = biliverdin IXalpha + CO + Fe(2+) + 3 oxidized [NADPH--hemoprotein reductase] + 3 H2O + H(+). In terms of biological role, catalyzes the opening of the heme ring with the release of iron. Key enzyme in the synthesis of the chromophoric part of the photosynthetic antennae. In Synechocystis sp. (strain ATCC 27184 / PCC 6803 / Kazusa), this protein is Heme oxygenase 2 (pbsA2).